The following is a 482-amino-acid chain: Chromosomal replication initiator protein DnaA (482 aa).

A domain I, interacts with DnaA modulators region spans residues 1–71 (MKQSILFERV…TGLFQAEDPE (71 aa)). The segment at 71 to 139 (EILKIEVLVR…ASFGSPLFGS (69 aa)) is domain II. Residues 140–362 (PLDSRFTFDT…GAFNQLVFRR (223 aa)) form a domain III, AAA+ region region. Residues Gly186, Gly188, Lys189, and Thr190 each contribute to the ATP site. The domain IV, binds dsDNA stretch occupies residues 363–482 (SFEPNLSIER…VELLKRLINE (120 aa)).

Belongs to the DnaA family. In terms of assembly, oligomerizes as a right-handed, spiral filament on DNA at oriC.

The protein localises to the cytoplasm. Functionally, plays an essential role in the initiation and regulation of chromosomal replication. ATP-DnaA binds to the origin of replication (oriC) to initiate formation of the DNA replication initiation complex once per cell cycle. Binds the DnaA box (a 9 base pair repeat at the origin) and separates the double-stranded (ds)DNA. Forms a right-handed helical filament on oriC DNA; dsDNA binds to the exterior of the filament while single-stranded (ss)DNA is stabiized in the filament's interior. The ATP-DnaA-oriC complex binds and stabilizes one strand of the AT-rich DNA unwinding element (DUE), permitting loading of DNA polymerase. After initiation quickly degrades to an ADP-DnaA complex that is not apt for DNA replication. Binds acidic phospholipids. In Rhizobium johnstonii (strain DSM 114642 / LMG 32736 / 3841) (Rhizobium leguminosarum bv. viciae), this protein is Chromosomal replication initiator protein DnaA.